The primary structure comprises 159 residues: Ribosomal RNA large subunit methyltransferase H (159 aa).

Residues L76 and G108 each contribute to the S-adenosyl-L-methionine site.

Belongs to the RNA methyltransferase RlmH family. Homodimer.

The protein resides in the cytoplasm. It carries out the reaction pseudouridine(1915) in 23S rRNA + S-adenosyl-L-methionine = N(3)-methylpseudouridine(1915) in 23S rRNA + S-adenosyl-L-homocysteine + H(+). Its function is as follows. Specifically methylates the pseudouridine at position 1915 (m3Psi1915) in 23S rRNA. In Levilactobacillus brevis (strain ATCC 367 / BCRC 12310 / CIP 105137 / JCM 1170 / LMG 11437 / NCIMB 947 / NCTC 947) (Lactobacillus brevis), this protein is Ribosomal RNA large subunit methyltransferase H.